The primary structure comprises 199 residues: Recombination protein RecR (199 aa).

The C4-type zinc-finger motif lies at 57-72; sequence CQQCRTFTEQNLCAIC. Residues 81–176 enclose the Toprim domain; that stretch reads GMICVVEMPV…KVSRIAHGVP (96 aa).

It belongs to the RecR family.

May play a role in DNA repair. It seems to be involved in an RecBC-independent recombinational process of DNA repair. It may act with RecF and RecO. This chain is Recombination protein RecR, found in Psychromonas ingrahamii (strain DSM 17664 / CCUG 51855 / 37).